Reading from the N-terminus, the 175-residue chain is Ribosome maturation factor RimM (175 aa).

Residues 95–175 (SEDEFYWREL…RIEVDWDPGF (81 aa)) form the PRC barrel domain.

Belongs to the RimM family. Binds ribosomal protein uS19.

It is found in the cytoplasm. Functionally, an accessory protein needed during the final step in the assembly of 30S ribosomal subunit, possibly for assembly of the head region. Essential for efficient processing of 16S rRNA. May be needed both before and after RbfA during the maturation of 16S rRNA. It has affinity for free ribosomal 30S subunits but not for 70S ribosomes. This is Ribosome maturation factor RimM from Aliivibrio fischeri (strain MJ11) (Vibrio fischeri).